The chain runs to 525 residues: GMP synthase [glutamine-hydrolyzing] (525 aa).

The region spanning 8–206 is the Glutamine amidotransferase type-1 domain; the sequence is PLLILDFGSQ…VVDICKASTD (199 aa). Cys-85 serves as the catalytic Nucleophile. Residues His-180 and Glu-182 contribute to the active site. The GMPS ATP-PPase domain occupies 207 to 400; that stretch reads WTPEHIIDEA…LGLPHDMVYR (194 aa). An ATP-binding site is contributed by 234–240; that stretch reads SGGVDSS.

In terms of assembly, homodimer.

The enzyme catalyses XMP + L-glutamine + ATP + H2O = GMP + L-glutamate + AMP + diphosphate + 2 H(+). The protein operates within purine metabolism; GMP biosynthesis; GMP from XMP (L-Gln route): step 1/1. In terms of biological role, catalyzes the synthesis of GMP from XMP. The protein is GMP synthase [glutamine-hydrolyzing] of Legionella pneumophila (strain Paris).